The sequence spans 353 residues: Cyclin-dependent kinase-like 1 (353 aa).

The 283-residue stretch at 4-286 (YDRLSKLGEG…CSELMLHGIF (283 aa)) folds into the Protein kinase domain. Residues 10 to 18 (LGEGSYGVV) and K33 contribute to the ATP site. Residue D126 is the Proton acceptor of the active site. Positions 331-353 (GGNHGNNNNNGNGINRNFLPTIS) are disordered. Residues 335–347 (GNNNNNGNGINRN) are compositionally biased toward low complexity.

The protein belongs to the protein kinase superfamily. Ser/Thr protein kinase family. As to expression, specifically expressed in head and tail ciliated sensory neurons.

It localises to the cell projection. Its subcellular location is the cilium. It carries out the reaction L-seryl-[protein] + ATP = O-phospho-L-seryl-[protein] + ADP + H(+). The catalysed reaction is L-threonyl-[protein] + ATP = O-phospho-L-threonyl-[protein] + ADP + H(+). Functionally, modulates cilium assembly. This is Cyclin-dependent kinase-like 1 from Caenorhabditis elegans.